The following is a 1780-amino-acid chain: Callose synthase 12 (1780 aa).

Topologically, residues 1 to 302 (MSLRHRTVPP…ERRTFFYLYR (302 aa)) are cytoplasmic. Residues 303–323 (SFDRLWVMLALFLQAAIIVAW) form a helical membrane-spanning segment. At 324–348 (EEKPDTSSVTRQLWNALKARDVQVR) the chain is on the extracellular side. A helical membrane pass occupies residues 349–369 (LLTVFLTWSGMRLLQAVLDAA). At 370 to 386 (SQYPLVSRETKRHFFRM) the chain is on the cytoplasmic side. Residues 387–407 (LMKVIAAAVWIVAFTVLYTNI) form a helical membrane-spanning segment. Topologically, residues 408–427 (WKQKRQDRQWSNAATTKIYQ) are extracellular. Residues 428-448 (FLYAVGAFLVPEILALALFII) traverse the membrane as a helical segment. The Cytoplasmic portion of the chain corresponds to 449 to 489 (PWMRNFLEETNWKIFFALTWWFQGKSFVGRGLREGLVDNIK). Residues 490-510 (YSTFWIFVLATKFTFSYFLQV) form a helical membrane-spanning segment. At 511–542 (KPMIKPSKLLWNLKDVDYEWHQFYGDSNRFSV) the chain is on the extracellular side. The chain crosses the membrane as a helical span at residues 543 to 563 (ALLWLPVVLIYLMDIQIWYAI). Topologically, residues 564-1348 (YSSIVGAVVG…FFRMLSFFYT (785 aa)) are cytoplasmic. The chain crosses the membrane as a helical span at residues 1349–1369 (TVGFFFNTMMVILTVYAFLWG). Over 1370 to 1394 (RVYLALSGVEKSALADSTDTNAALG) the chain is Extracellular. Residues 1395-1415 (VILNQQFIIQLGLFTALPMIV) form a helical membrane-spanning segment. The Cytoplasmic portion of the chain corresponds to 1416–1421 (EWSLEE). A helical membrane pass occupies residues 1422–1442 (GFLLAIWNFIRMQIQLSAVFY). Topologically, residues 1443-1489 (TFSMGTRAHYFGRTILHGGAKYRATGRGFVVEHKGFTENYRLYARSH) are extracellular. The chain crosses the membrane as a helical span at residues 1490–1510 (FVKAIELGLILIVYASHSPIA). Topologically, residues 1511–1516 (KDSLIY) are cytoplasmic. Residues 1517-1537 (IAMTITSWFLVISWIMAPFVF) form a helical membrane-spanning segment. Topologically, residues 1538–1588 (NPSGFDWLKTVYDFEDFMNWIWYQGRISTKSEQSWEKWWYEEQDHLRNTGK) are extracellular. A helical transmembrane segment spans residues 1589-1609 (AGLFVEIILVLRFFFFQYGIV). The Cytoplasmic segment spans residues 1610–1620 (YQLKIANGSTS). A helical membrane pass occupies residues 1621-1641 (LFVYLFSWIYIFAIFVLFLVI). Over 1642 to 1657 (QYARDKYSAKAHIRYR) the chain is Extracellular. A helical transmembrane segment spans residues 1658 to 1678 (LVQFLLIVLAILVIVALLEFT). The Cytoplasmic segment spans residues 1679-1681 (HFS). The helical transmembrane segment at 1682–1702 (FIDIFTSLLAFIPTGWGILLI) threads the bilayer. The Extracellular portion of the chain corresponds to 1703 to 1728 (AQTQRKWLKNYTIFWNAVVSVARMYD). Residue asparagine 1712 is glycosylated (N-linked (GlcNAc...) asparagine). A helical transmembrane segment spans residues 1729–1749 (ILFGILIMVPVAFLSWMPGFQ). Residues 1750–1780 (SMQTRILFNEAFSRGLRIMQIVTGKKSKGDV) are Cytoplasmic-facing.

The protein belongs to the glycosyltransferase 48 family. As to expression, highly expressed in flowers. Expressed at low levels in roots, leaves, stems, cauline leaves and siliques.

Its subcellular location is the cell membrane. The catalysed reaction is [(1-&gt;3)-beta-D-glucosyl](n) + UDP-alpha-D-glucose = [(1-&gt;3)-beta-D-glucosyl](n+1) + UDP + H(+). Involved in sporophytic and gametophytic development. Required for normal leaf development. During pollen formation, required for the formation of the callose wall separating the tetraspores of the tetrad (interstitial wall), but not for the callose wall surrounding the pollen mother cells (peripheral wall). Functionally redudant to CALS11 (GSL1). May play a role later in pollen grain maturation. Required for callose formation induced by wounding and pathogen attack. May interfere with salicylic acid-induced signaling pathway during defense response. During plant growth and development, callose is found as a transitory component of the cell plate in dividing cells, is a major component of pollen mother cell walls and pollen tubes, and is found as a structural component of plasmodesmatal canals. This Arabidopsis thaliana (Mouse-ear cress) protein is Callose synthase 12 (CALS12).